The sequence spans 528 residues: Arginine--tRNA ligase (528 aa).

The 'HIGH' region motif lies at Ala112–His122.

It belongs to the class-I aminoacyl-tRNA synthetase family. Monomer.

Its subcellular location is the cytoplasm. It catalyses the reaction tRNA(Arg) + L-arginine + ATP = L-arginyl-tRNA(Arg) + AMP + diphosphate. The sequence is that of Arginine--tRNA ligase from Wolinella succinogenes (strain ATCC 29543 / DSM 1740 / CCUG 13145 / JCM 31913 / LMG 7466 / NCTC 11488 / FDC 602W) (Vibrio succinogenes).